Consider the following 269-residue polypeptide: Type II iodothyronine deiodinase (269 aa).

Residues 1–9 lie on the Lumenal side of the membrane; the sequence is MGILSVDLL. The chain crosses the membrane as a helical; Signal-anchor for type III membrane protein span at residues 10–34; sequence ITLQILPVFFSNCLFLALYDSVILL. Topologically, residues 35–269 are cytoplasmic; that stretch reads KHVVLLLSRS…KNFSKRUKLD (235 aa). The segment at 83 to 103 is disordered; the sequence is NSSVVHVSSPEGGDTSGNGAQ. Sec133 is a catalytic residue. 2 non-standard amino acids (selenocysteine) are found at residues Sec133 and Sec266.

Belongs to the iodothyronine deiodinase family. In terms of assembly, predominantly monomer. Can form homodimers but homodimerization is not essential for enzyme activity. Interacts with USP20 and USP33. Interacts with MARCHF6. Post-translationally, ubiquitinated by MARCHF6, leading to its degradation by the proteasome. Deubiquitinated by USP20 and USP33. As to expression, highly expressed in thyroid, mammary and pituitary glands, then in hypothalamus. Low levels detected in diaphragm, heart, kidney and lung.

It is found in the endoplasmic reticulum membrane. The catalysed reaction is 3,3',5-triiodo-L-thyronine + iodide + A + H(+) = L-thyroxine + AH2. The enzyme catalyses 3,3'-diiodo-L-thyronine + iodide + A + H(+) = 3,3',5'-triiodo-L-thyronine + AH2. It catalyses the reaction 3'-iodo-L-thyronine + iodide + A + H(+) = 3',5'-diiodo-L-thyronine + AH2. It carries out the reaction 3,3'-diiodothyronamine + iodide + A + H(+) = 3,3',5'-triiodothyronamine + AH2. The catalysed reaction is 3'-iodothyronamine + iodide + A + H(+) = 3',5'-diiodothyronamine + AH2. In terms of biological role, plays a crucial role in the metabolism of thyroid hormones (TH) and has specific roles in TH activation and inactivation by deiodination. Catalyzes the deiodination of L-thyroxine (T4) to 3,5,3'-triiodothyronine (T3), 3,3',5'-triiodothyronine (rT3) to 3,3'-diiodothyronine (3,3'-T2) and 3',5'-diiodothyronine (3',5'-T2) to 3'-monoiodothyronine (3'-T1) via outer-ring deiodination (ORD). Catalyzes the phenolic ring deiodinations of 3,3',5'-triiodothyronamine and 3',5'- diiodothyronamine. The sequence is that of Type II iodothyronine deiodinase (DIO2) from Bos taurus (Bovine).